A 465-amino-acid polypeptide reads, in one-letter code: Adenosine 3'-phospho 5'-phosphosulfate transporter 1 (465 aa).

10 consecutive transmembrane segments (helical) span residues 13–33 (LVIC…SDLL), 61–81 (FLKL…GFLI), 142–162 (AVQL…WGVL), 185–205 (QFLV…YLQW), 270–290 (SYEY…MSGS), 299–319 (VTTL…SFTA), 339–359 (GVNL…GGFM), 370–390 (KFVF…LFIY), 391–407 (HTID…IMTL), and 424–444 (ISLL…LRVY).

It belongs to the nucleotide-sugar transporter family. SLC35B subfamily. As to expression, expressed throughout embryogenesis. During oogenesis, it is expressed strongly in the nurse cells of the germline. Maternally expressed at the syncytial blastoderm stage. Zygotically expressed, from after germ-band elongation in the invaginating salivary gland placodes. Remains expressed predominantly in this tissue throughout embryogenesis, but low-level expression may also be present throughout the embryo.

It is found in the golgi apparatus membrane. Its function is as follows. Mediates the transport of adenosine 3'-phospho 5'-phosphosulfate (PAPS), from cytosol into Golgi. PAPS is a universal sulfuryl donor for sulfation events that take place in the Golgi. Required for the dorsoventral patterning, suggesting that it mediates the transport of the sulfate donor required for the sulfotransferase activity of pip (pipe). The sequence is that of Adenosine 3'-phospho 5'-phosphosulfate transporter 1 (sll) from Drosophila melanogaster (Fruit fly).